The following is a 113-amino-acid chain: Large ribosomal subunit protein uL22 (113 aa).

This sequence belongs to the universal ribosomal protein uL22 family. In terms of assembly, part of the 50S ribosomal subunit.

Functionally, this protein binds specifically to 23S rRNA; its binding is stimulated by other ribosomal proteins, e.g. L4, L17, and L20. It is important during the early stages of 50S assembly. It makes multiple contacts with different domains of the 23S rRNA in the assembled 50S subunit and ribosome. Its function is as follows. The globular domain of the protein is located near the polypeptide exit tunnel on the outside of the subunit, while an extended beta-hairpin is found that lines the wall of the exit tunnel in the center of the 70S ribosome. This chain is Large ribosomal subunit protein uL22, found in Neorickettsia sennetsu (strain ATCC VR-367 / Miyayama) (Ehrlichia sennetsu).